Reading from the N-terminus, the 752-residue chain is Putative xanthine dehydrogenase molybdenum-binding subunit XdhA (752 aa).

Positions 206, 237, 350, and 516 each coordinate Mo-molybdopterin.

The protein belongs to the xanthine dehydrogenase family. In terms of assembly, heterotrimer of XdhA, XdhB and XdhC. Mo-molybdopterin is required as a cofactor.

It carries out the reaction xanthine + NAD(+) + H2O = urate + NADH + H(+). It catalyses the reaction hypoxanthine + NAD(+) + H2O = xanthine + NADH + H(+). Its pathway is purine metabolism; hypoxanthine degradation; urate from hypoxanthine: step 1/2. The protein operates within purine metabolism; hypoxanthine degradation; urate from hypoxanthine: step 2/2. Functionally, presumed to be a dehydrogenase, but possibly an oxidase. Participates in limited purine salvage (requires aspartate) but does not support aerobic growth on purines as the sole carbon source (purine catabolism). Deletion results in increased adenine sensitivity, suggesting that this protein contributes to the conversion of adenine to guanine nucleotides during purine salvage. This Escherichia coli (strain K12) protein is Putative xanthine dehydrogenase molybdenum-binding subunit XdhA (xdhA).